Here is a 258-residue protein sequence, read N- to C-terminus: Axonemal dynein light intermediate polypeptide 1 (258 aa).

Disordered regions lie at residues 1–60 (MIPP…CVPD) and 202–231 (DLER…EEKK). Residues 176-255 (MRKALQAEQG…LKAQLEGIIA (80 aa)) are a coiled coil.

This sequence belongs to the inner dynein arm light chain family. As to quaternary structure, interacts with CFAP45. Interacts with DYNC1H1.

The protein resides in the cell projection. It localises to the cilium. It is found in the flagellum. Its subcellular location is the dynein axonemal particle. The protein localises to the cytoplasm. Its function is as follows. Involved in sperm flagellum assembly. This is Axonemal dynein light intermediate polypeptide 1 from Rattus norvegicus (Rat).